The primary structure comprises 577 residues: Adenine deaminase (577 aa).

The protein belongs to the metallo-dependent hydrolases superfamily. Adenine deaminase family. Mn(2+) serves as cofactor.

The enzyme catalyses adenine + H2O + H(+) = hypoxanthine + NH4(+). The polypeptide is Adenine deaminase (Geobacillus kaustophilus (strain HTA426)).